The chain runs to 239 residues: LexA repressor (239 aa).

The H-T-H motif DNA-binding region spans 26–46 (FDEMKEALDLASKSGIHRLIT). The segment at 90–110 (GSLGKTPPPPARPAPVATNDD) is disordered. Residues S160 and K198 each act as for autocatalytic cleavage activity in the active site.

The protein belongs to the peptidase S24 family. Homodimer.

It carries out the reaction Hydrolysis of Ala-|-Gly bond in repressor LexA.. Functionally, represses a number of genes involved in the response to DNA damage (SOS response), including recA and lexA. In the presence of single-stranded DNA, RecA interacts with LexA causing an autocatalytic cleavage which disrupts the DNA-binding part of LexA, leading to derepression of the SOS regulon and eventually DNA repair. This is LexA repressor from Brucella anthropi (strain ATCC 49188 / DSM 6882 / CCUG 24695 / JCM 21032 / LMG 3331 / NBRC 15819 / NCTC 12168 / Alc 37) (Ochrobactrum anthropi).